A 405-amino-acid chain; its full sequence is Type II secretion system protein F (405 aa).

Residues methionine 1 to glutamine 168 lie on the Cytoplasmic side of the membrane. Ca(2+) is bound by residues threonine 97, glutamate 151, and aspartate 155. Residues leucine 169 to leucine 189 form a helical membrane-spanning segment. The Periplasmic segment spans residues glycine 190–aspartate 219. The helical transmembrane segment at tryptophan 220–phenylalanine 239 threads the bilayer. Over arginine 240–proline 376 the chain is Cytoplasmic. Residues phenylalanine 377–isoleucine 397 traverse the membrane as a helical segment. The Periplasmic segment spans residues leucine 398–glycine 405.

This sequence belongs to the GSP F family. As to quaternary structure, type II secretion system is composed of four main components: the outer membrane complex, the inner membrane complex, the cytoplasmic secretion ATPase and the periplasm-spanning pseudopilus. Homodimer. Interacts with XcpR/GspE and XcpY/GspL components.

Its subcellular location is the cell inner membrane. In terms of biological role, component of the type II secretion system inner membrane complex required for the energy-dependent secretion of extracellular factors such as proteases and toxins from the periplasm. The protein is Type II secretion system protein F (xcpS) of Pseudomonas aeruginosa (strain ATCC 15692 / DSM 22644 / CIP 104116 / JCM 14847 / LMG 12228 / 1C / PRS 101 / PAO1).